A 331-amino-acid chain; its full sequence is Pantothenate kinase (331 aa).

Residue 109-116 participates in ATP binding; it reads GSVAVGKS.

The protein belongs to the prokaryotic pantothenate kinase family.

The protein resides in the cytoplasm. The catalysed reaction is (R)-pantothenate + ATP = (R)-4'-phosphopantothenate + ADP + H(+). Its pathway is cofactor biosynthesis; coenzyme A biosynthesis; CoA from (R)-pantothenate: step 1/5. This chain is Pantothenate kinase, found in Rhizobium meliloti (strain 1021) (Ensifer meliloti).